Here is a 374-residue protein sequence, read N- to C-terminus: Tryptophan--tRNA ligase (374 aa).

Residues 81-89 (PSGPVHIGH) carry the 'HIGH' region motif. The short motif at 258–262 (KMSAS) is the 'KMSKS' region element.

Belongs to the class-I aminoacyl-tRNA synthetase family.

The protein localises to the cytoplasm. It catalyses the reaction tRNA(Trp) + L-tryptophan + ATP = L-tryptophyl-tRNA(Trp) + AMP + diphosphate + H(+). This chain is Tryptophan--tRNA ligase, found in Pyrobaculum calidifontis (strain DSM 21063 / JCM 11548 / VA1).